A 139-amino-acid polypeptide reads, in one-letter code: Large-conductance mechanosensitive channel (139 aa).

Transmembrane regions (helical) follow at residues 9-29 (AFAV…GAAF) and 79-99 (IQTV…VKAI).

It belongs to the MscL family. In terms of assembly, homopentamer.

The protein resides in the cell inner membrane. Channel that opens in response to stretch forces in the membrane lipid bilayer. May participate in the regulation of osmotic pressure changes within the cell. In Pseudomonas putida (strain GB-1), this protein is Large-conductance mechanosensitive channel.